We begin with the raw amino-acid sequence, 267 residues long: Tryptophan synthase alpha chain (267 aa).

Active-site proton acceptor residues include glutamate 49 and aspartate 60.

It belongs to the TrpA family. Tetramer of two alpha and two beta chains.

The catalysed reaction is (1S,2R)-1-C-(indol-3-yl)glycerol 3-phosphate + L-serine = D-glyceraldehyde 3-phosphate + L-tryptophan + H2O. Its pathway is amino-acid biosynthesis; L-tryptophan biosynthesis; L-tryptophan from chorismate: step 5/5. Its function is as follows. The alpha subunit is responsible for the aldol cleavage of indoleglycerol phosphate to indole and glyceraldehyde 3-phosphate. This is Tryptophan synthase alpha chain from Salinispora tropica (strain ATCC BAA-916 / DSM 44818 / JCM 13857 / NBRC 105044 / CNB-440).